A 157-amino-acid chain; its full sequence is Nicotinate dehydrogenase subunit A (157 aa).

Positions 3–79 (TTISLQVNGQ…GRNITTLEGL (77 aa)) constitute a 2Fe-2S ferredoxin-type domain. Cys41, Cys46, Cys49, and Cys61 together coordinate [2Fe-2S] cluster.

Requires [2Fe-2S] cluster as cofactor.

The catalysed reaction is 2 Fe(III)-[cytochrome] + nicotinate + H2O = 2 Fe(II)-[cytochrome] + 6-hydroxynicotinate + 2 H(+). It participates in cofactor degradation; nicotinate degradation. Subunit of the two-component enzyme NicAB that mediates nicotinate hydroxylation, the first step in the aerobic nicotinate degradation pathway. Mediates conversion of nicotinate into 6-hydroxynicotinate (6HNA). The sequence is that of Nicotinate dehydrogenase subunit A (nicA) from Pseudomonas putida (strain ATCC 47054 / DSM 6125 / CFBP 8728 / NCIMB 11950 / KT2440).